A 527-amino-acid chain; its full sequence is Ribonuclease Y (527 aa).

Residues 21–41 (ILAIFFSFIIGIVFGGMALFV) traverse the membrane as a helical segment. The disordered stretch occupies residues 78–97 (READKTRNSAETELKERRSE). The KH domain maps to 217–302 (TTNVVPLPSD…EVVTKAKEEV (86 aa)). Positions 343–436 (VLQHSIEVAQ…VSAADAISSA (94 aa)) constitute an HD domain.

Belongs to the RNase Y family.

The protein localises to the cell membrane. Functionally, endoribonuclease that initiates mRNA decay. This chain is Ribonuclease Y, found in Dehalococcoides mccartyi (strain ATCC BAA-2100 / JCM 16839 / KCTC 5957 / BAV1).